A 189-amino-acid chain; its full sequence is Transmembrane protein 229b (189 aa).

Over 1–17 (MATTVTPEPLTALSRWY) the chain is Cytoplasmic. Residues 18–38 (LYAIHGYFCEVMFTAAWEFVV) traverse the membrane as a helical segment. The Extracellular portion of the chain corresponds to 39–43 (NCNWK). The chain crosses the membrane as a helical span at residues 44–64 (FPGVTSVWALFIYGTCILIVE). Topologically, residues 65–75 (RMYLCLKDRCN) are cytoplasmic. The helical transmembrane segment at 76-96 (VLLRCIIYTLWTYFWEFGTGF) threads the bilayer. At 97-114 (LLRQFNACPWDYSEFKYN) the chain is on the extracellular side. The helical transmembrane segment at 115–135 (FMGLITAEYAVPWFCASFIVE) threads the bilayer. The Cytoplasmic portion of the chain corresponds to 136–189 (RLVIRNTLRLRFDEVAESGQAEERLDRGGGGRGGRRGRGARAGATSANGYVKVD). Residues 158-189 (ERLDRGGGGRGGRRGRGARAGATSANGYVKVD) are disordered.

Belongs to the TMEM229 family.

The protein resides in the membrane. In Danio rerio (Zebrafish), this protein is Transmembrane protein 229b (tmem229b).